A 938-amino-acid chain; its full sequence is Isoleucine--tRNA ligase (938 aa).

Positions 58-68 (PYANGSIHIGH) match the 'HIGH' region motif. At K183 the chain carries N6-acetyllysine. E561 contributes to the L-isoleucyl-5'-AMP binding site. A 'KMSKS' region motif is present at residues 602–606 (KMSKS). K605 provides a ligand contact to ATP. Residues C901, C904, C921, and C924 each coordinate Zn(2+).

The protein belongs to the class-I aminoacyl-tRNA synthetase family. IleS type 1 subfamily. In terms of assembly, monomer. The cofactor is Zn(2+).

Its subcellular location is the cytoplasm. It carries out the reaction tRNA(Ile) + L-isoleucine + ATP = L-isoleucyl-tRNA(Ile) + AMP + diphosphate. In terms of biological role, catalyzes the attachment of isoleucine to tRNA(Ile). As IleRS can inadvertently accommodate and process structurally similar amino acids such as valine, to avoid such errors it has two additional distinct tRNA(Ile)-dependent editing activities. One activity is designated as 'pretransfer' editing and involves the hydrolysis of activated Val-AMP. The other activity is designated 'posttransfer' editing and involves deacylation of mischarged Val-tRNA(Ile). This is Isoleucine--tRNA ligase from Escherichia coli O9:H4 (strain HS).